The primary structure comprises 153 residues: Pheromone-binding protein Gp-9 (153 aa).

A signal peptide spans 1 to 19 (MKTFVLHIFIFAFVAFASA). Cystine bridges form between Cys-37–Cys-77, Cys-73–Cys-129, and Cys-118–Cys-138.

This sequence belongs to the PBP/GOBP family. Homodimer.

The protein resides in the secreted. Its function is as follows. Colony queen number, a major feature of social organization, is associated with worker genotype for Gp-9. Colonies are headed by either a single reproductive queen (monogyne form) or multiple queens (polygyne form). Differences in worker Gp-9 genotypes between social forms may cause differences in workers' abilities to recognize queens and regulate their numbers. The sequence is that of Pheromone-binding protein Gp-9 from Solenopsis geminata (Tropical fire ant).